The following is a 265-amino-acid chain: Short-chain dehydrogenase/reductase GME11373 (265 aa).

4 residues coordinate NADP(+): Ile-26, Asp-72, Asn-99, and Arg-132. Residues Ser-148 and Ser-149 each act as proton donor in the active site. Tyr-163, Lys-167, and Thr-198 together coordinate NADP(+). The Proton acceptor role is filled by Tyr-163. The active-site Lowers pKa of active site Tyr is Lys-167.

This sequence belongs to the short-chain dehydrogenases/reductases (SDR) family.

Its pathway is secondary metabolite biosynthesis. In terms of biological role, short-chain dehydrogenase/reductase; part of the gene cluster that mediates the biosynthesis of dibenzodioxocinones such as pestalotiollide B, a novel class of inhibitors against cholesterol ester transfer protein (CEPT). The biosynthesis initiates from condensation of acetate and malonate units catalyzed by the non-reducing PKS pks8/GME11356. Pks8/GME11356 lacks a thioesterase (TE) domain, which is important to the cyclizing of the third ring of atrochrysone carboxylic acid, and the esterase GME11355 might play the role of TE and catalyzes the cyclization reaction of the C ring. The lactamase-like protein GME11357 (or other beta-lactamases in Pestalotiopsis microspora) probably hydrolyzes the thioester bond between the ACP of pks8/GME11356 and the intermediate to release atrochrysone carboxylic acid, which is spontaneously dehydrates to form endocrocin anthrone. Endocrocin anthrone is further converted to emodin via the endocrocin intermediate. Emodin is then oxidized by several enzymes such as the Baeyer-Villiger oxidase GME11358, the oxidoreductase GME11367, the short chain dehydrogenase/reductase GME11373, as well as by other oxidoreductases from the cluster, to modify the A and C rings and open the B ring, and finally yield monodictyphenone. The prenyltransferase GME11375 may catalyze the addition reaction between the C5 side chains and the carbon bone of dibenzodioxocinones. The remaining biochemical reactions to the final product dibenzodioxocinones should be methylation catalyzed by methyltransferase GME11366 and reduction and lactonization reaction catalyzed by a series of oxidordeuctases. The chain is Short-chain dehydrogenase/reductase GME11373 from Pestalotiopsis microspora.